The following is a 155-amino-acid chain: UPF0060 membrane protein MA_3936 (155 aa).

3 consecutive transmembrane segments (helical) span residues leucine 8–tryptophan 28, alanine 35–glutamine 55, and valine 62–aspartate 82.

It belongs to the UPF0060 family.

It is found in the cell membrane. In Methanosarcina acetivorans (strain ATCC 35395 / DSM 2834 / JCM 12185 / C2A), this protein is UPF0060 membrane protein MA_3936.